A 274-amino-acid chain; its full sequence is Phosphatidylglycerol--prolipoprotein diacylglyceryl transferase (274 aa).

Helical transmembrane passes span 16-36, 62-82, 94-114, and 129-149; these read VGLH…LSSF, FALG…VLFY, IIKI…LVIW, and LSVT…ALLI. Arg-150 is an a 1,2-diacyl-sn-glycero-3-phospho-(1'-sn-glycerol) binding site. A run of 3 helical transmembrane segments spans residues 184 to 204, 213 to 233, and 247 to 267; these read VQLY…WLCY, GYSA…AEFF, and LTIG…ILWI.

The protein belongs to the Lgt family.

It localises to the cell inner membrane. The enzyme catalyses L-cysteinyl-[prolipoprotein] + a 1,2-diacyl-sn-glycero-3-phospho-(1'-sn-glycerol) = an S-1,2-diacyl-sn-glyceryl-L-cysteinyl-[prolipoprotein] + sn-glycerol 1-phosphate + H(+). The protein operates within protein modification; lipoprotein biosynthesis (diacylglyceryl transfer). Its function is as follows. Catalyzes the transfer of the diacylglyceryl group from phosphatidylglycerol to the sulfhydryl group of the N-terminal cysteine of a prolipoprotein, the first step in the formation of mature lipoproteins. The sequence is that of Phosphatidylglycerol--prolipoprotein diacylglyceryl transferase from Chlamydia muridarum (strain MoPn / Nigg).